The following is a 295-amino-acid chain: Indole-3-glycerol phosphate synthase (295 aa).

This sequence belongs to the TrpC family.

The catalysed reaction is 1-(2-carboxyphenylamino)-1-deoxy-D-ribulose 5-phosphate + H(+) = (1S,2R)-1-C-(indol-3-yl)glycerol 3-phosphate + CO2 + H2O. It participates in amino-acid biosynthesis; L-tryptophan biosynthesis; L-tryptophan from chorismate: step 4/5. The chain is Indole-3-glycerol phosphate synthase from Prochlorococcus marinus (strain MIT 9515).